The sequence spans 94 residues: UPF0235 protein TK0768 (94 aa).

The protein belongs to the UPF0235 family.

This Thermococcus kodakarensis (strain ATCC BAA-918 / JCM 12380 / KOD1) (Pyrococcus kodakaraensis (strain KOD1)) protein is UPF0235 protein TK0768.